The primary structure comprises 283 residues: uncharacterized protein (283 aa).

Helical transmembrane passes span 18–38 (VYDI…AKLI), 61–81 (VIYF…LGLD), and 94–114 (IVLG…IFLI).

The protein belongs to the MscS (TC 1.A.23) family.

The protein localises to the cell membrane. This is an uncharacterized protein from Archaeoglobus fulgidus (strain ATCC 49558 / DSM 4304 / JCM 9628 / NBRC 100126 / VC-16).